The chain runs to 374 residues: DNA replication and repair protein RecF (374 aa).

30–37 (GPNAQGKT) contributes to the ATP binding site.

It belongs to the RecF family.

Its subcellular location is the cytoplasm. Functionally, the RecF protein is involved in DNA metabolism; it is required for DNA replication and normal SOS inducibility. RecF binds preferentially to single-stranded, linear DNA. It also seems to bind ATP. In Lactobacillus johnsonii (strain CNCM I-12250 / La1 / NCC 533), this protein is DNA replication and repair protein RecF.